We begin with the raw amino-acid sequence, 783 residues long: E3 UFM1-protein ligase 1 homolog (783 aa).

A disordered region spans residues 406 to 476; sequence TLGTTHDADE…DAVQQSANSS (71 aa). Basic residues predominate over residues 446-457; it reads KSTKKHQRGRAA.

Belongs to the UFL1 family.

In terms of biological role, E3 UFM1-protein ligase that mediates ufmylation of target proteins. In Drosophila grimshawi (Hawaiian fruit fly), this protein is E3 UFM1-protein ligase 1 homolog.